Consider the following 117-residue polypeptide: Putative phosphotransferase enzyme IIB component MPN_268 (117 aa).

The chain crosses the membrane as a helical span at residues methionine 1–valine 21. A PTS EIIB type-1 domain is found at proline 42 to arginine 117.

The protein resides in the membrane. Functionally, the phosphoenolpyruvate-dependent sugar phosphotransferase system (PTS), a major carbohydrate active -transport system, catalyzes the phosphorylation of incoming sugar substrates concomitant with their translocation across the cell membrane. The chain is Putative phosphotransferase enzyme IIB component MPN_268 from Mycoplasma pneumoniae (strain ATCC 29342 / M129 / Subtype 1) (Mycoplasmoides pneumoniae).